A 647-amino-acid chain; its full sequence is Chaperone protein DnaK (647 aa).

At Thr-198 the chain carries Phosphothreonine; by autocatalysis. Residues 603-647 are disordered; it reads EQAQGAGGAQGFDPNAFQGGDAGQQQKADDGVVDAEFTEVKDDKK. Residues 618–628 show a composition bias toward low complexity; it reads AFQGGDAGQQQ.

This sequence belongs to the heat shock protein 70 family.

Its function is as follows. Acts as a chaperone. The protein is Chaperone protein DnaK of Acinetobacter baylyi (strain ATCC 33305 / BD413 / ADP1).